The primary structure comprises 307 residues: Ribonuclease Z (307 aa).

Residues H62, H64, D66, H67, H139, D210, and H268 each contribute to the Zn(2+) site. D66 acts as the Proton acceptor in catalysis.

Belongs to the RNase Z family. As to quaternary structure, homodimer. It depends on Zn(2+) as a cofactor.

The enzyme catalyses Endonucleolytic cleavage of RNA, removing extra 3' nucleotides from tRNA precursor, generating 3' termini of tRNAs. A 3'-hydroxy group is left at the tRNA terminus and a 5'-phosphoryl group is left at the trailer molecule.. In terms of biological role, zinc phosphodiesterase, which displays some tRNA 3'-processing endonuclease activity. Probably involved in tRNA maturation, by removing a 3'-trailer from precursor tRNA. This is Ribonuclease Z from Myxococcus xanthus (strain DK1622).